A 322-amino-acid chain; its full sequence is Formimidoylglutamase (322 aa).

Mn(2+)-binding residues include H130, D156, H158, D160, C244, and D246.

This sequence belongs to the arginase family. Mn(2+) serves as cofactor.

The enzyme catalyses N-formimidoyl-L-glutamate + H2O = formamide + L-glutamate. The protein operates within amino-acid degradation; L-histidine degradation into L-glutamate; L-glutamate from N-formimidoyl-L-glutamate (hydrolase route): step 1/1. Catalyzes the conversion of N-formimidoyl-L-glutamate to L-glutamate and formamide. The chain is Formimidoylglutamase from Geobacillus thermodenitrificans (strain NG80-2).